A 147-amino-acid chain; its full sequence is uncharacterized protein (147 aa).

This is an uncharacterized protein from Ureaplasma parvum serovar 3 (strain ATCC 700970).